Reading from the N-terminus, the 109-residue chain is Aquaporin-2 (109 aa).

The Cytoplasmic portion of the chain corresponds to Ser1–Arg6. The chain crosses the membrane as a helical span at residues Ala7–Leu27. Residues Asn28–Ser35 lie on the Extracellular side of the membrane. Residues Val36–Leu54 form a helical membrane-spanning segment. Topologically, residues Gly55–Gly59 are cytoplasmic. The discontinuously helical intramembrane region spans Ala60–Ala69. The NPA 1 motif lies at Asn63 to Ala65. At Cys70–Arg80 the chain is on the cytoplasmic side. A helical transmembrane segment spans residues Ala81–Ile102. Topologically, residues Thr103–Gly109 are extracellular.

Belongs to the MIP/aquaporin (TC 1.A.8) family. In terms of assembly, homotetramer. Post-translationally, serine phosphorylation is necessary and sufficient for expression at the apical membrane. Endocytosis is not phosphorylation-dependent. N-glycosylated.

It is found in the apical cell membrane. Its subcellular location is the basolateral cell membrane. The protein localises to the cell membrane. The protein resides in the cytoplasmic vesicle membrane. It localises to the golgi apparatus. It is found in the trans-Golgi network membrane. It carries out the reaction H2O(in) = H2O(out). The enzyme catalyses glycerol(in) = glycerol(out). Forms a water-specific channel that provides the plasma membranes of renal collecting duct with high permeability to water, thereby permitting water to move in the direction of an osmotic gradient. Plays an essential role in renal water homeostasis. Could also be permeable to glycerol. This Canis lupus familiaris (Dog) protein is Aquaporin-2.